The chain runs to 268 residues: uncharacterized protein (268 aa).

The signal sequence occupies residues 1-18 (MRGFLLLSLGVFSFSALA). Domain regions lie at residues 24 to 184 (SHDL…ELLP) and 185 to 268 (SPAT…NWLR). An intrachain disulfide couples Cys110 to Cys115.

As to quaternary structure, monomer.

It is found in the periplasm. This is an uncharacterized protein from Pseudomonas aeruginosa (strain ATCC 15692 / DSM 22644 / CIP 104116 / JCM 14847 / LMG 12228 / 1C / PRS 101 / PAO1).